A 230-amino-acid chain; its full sequence is Ribosomal RNA large subunit methyltransferase E (230 aa).

5 residues coordinate S-adenosyl-L-methionine: Gly82, Trp84, Asp100, Asp116, and Asp140. The active-site Proton acceptor is the Lys180.

The protein belongs to the class I-like SAM-binding methyltransferase superfamily. RNA methyltransferase RlmE family.

It localises to the cytoplasm. The catalysed reaction is uridine(2552) in 23S rRNA + S-adenosyl-L-methionine = 2'-O-methyluridine(2552) in 23S rRNA + S-adenosyl-L-homocysteine + H(+). Functionally, specifically methylates the uridine in position 2552 of 23S rRNA at the 2'-O position of the ribose in the fully assembled 50S ribosomal subunit. The chain is Ribosomal RNA large subunit methyltransferase E from Granulibacter bethesdensis (strain ATCC BAA-1260 / CGDNIH1).